The primary structure comprises 892 residues: Alanine--tRNA ligase (892 aa).

His565, His569, Cys678, and His682 together coordinate Zn(2+). A disordered region spans residues 857–876 (GGKGGGGRPDMAQAGGPDGA).

Belongs to the class-II aminoacyl-tRNA synthetase family. Requires Zn(2+) as cofactor.

It is found in the cytoplasm. The catalysed reaction is tRNA(Ala) + L-alanine + ATP = L-alanyl-tRNA(Ala) + AMP + diphosphate. Catalyzes the attachment of alanine to tRNA(Ala) in a two-step reaction: alanine is first activated by ATP to form Ala-AMP and then transferred to the acceptor end of tRNA(Ala). Also edits incorrectly charged Ser-tRNA(Ala) and Gly-tRNA(Ala) via its editing domain. The polypeptide is Alanine--tRNA ligase (Bradyrhizobium diazoefficiens (strain JCM 10833 / BCRC 13528 / IAM 13628 / NBRC 14792 / USDA 110)).